The chain runs to 518 residues: Homoserine O-acetyltransferase (518 aa).

The region spanning 69–468 is the AB hydrolase-1 domain; that stretch reads NVMVICHALT…DSPEGHDAFL (400 aa). S182 is a catalytic residue. The Nucleophile role is filled by S182. The disordered stretch occupies residues 267-365; sequence RFGRNIPDPS…PNSVSDPFRP (99 aa). Residues 290–303 show a composition bias toward basic and acidic residues; it reads PAEEHYDIHNEGFR. Residues 310 to 341 show a composition bias toward low complexity; sequence RSSTTTSDAPPSPTRTSSTSSTDAITPASTTP. Residues D435 and H464 contribute to the active site.

Belongs to the AB hydrolase superfamily. MetX family.

It carries out the reaction L-homoserine + acetyl-CoA = O-acetyl-L-homoserine + CoA. Its pathway is amino-acid biosynthesis; L-methionine biosynthesis via de novo pathway; O-acetyl-L-homoserine from L-homoserine: step 1/1. In terms of biological role, commits homoserine to the methionine biosynthesis pathway by catalyzing its O-acetylation. In Ascobolus immersus, this protein is Homoserine O-acetyltransferase (MET2).